Reading from the N-terminus, the 30-residue chain is Diuretic hormone 2 (30 aa).

A Valine amide modification is found at valine 30.

The protein belongs to the sauvagine/corticotropin-releasing factor/urotensin I family.

It localises to the secreted. Its function is as follows. Regulation of fluid secretion. This is Diuretic hormone 2 from Manduca sexta (Tobacco hawkmoth).